Here is a 226-residue protein sequence, read N- to C-terminus: ATP synthase F(0) complex subunit a (226 aa).

6 helical membrane passes run 6–26 (FASFIAPTMMGLPIVTLIIMF), 68–88 (WSLMLMSLIMFIGSTNILGLL), 97–117 (QLSMNLGMAIPLWSATVFTGF), 136–156 (LLIPMLVIIETISLFIQPVAL), 164–184 (ITAGHLLIHLIGGATLALLNI), and 189–209 (AFITFTILILLTILEFAVALI).

This sequence belongs to the ATPase A chain family. As to quaternary structure, component of the ATP synthase complex composed at least of ATP5F1A/subunit alpha, ATP5F1B/subunit beta, ATP5MC1/subunit c (homooctomer), MT-ATP6/subunit a, MT-ATP8/subunit 8, ATP5ME/subunit e, ATP5MF/subunit f, ATP5MG/subunit g, ATP5MK/subunit k, ATP5MJ/subunit j, ATP5F1C/subunit gamma, ATP5F1D/subunit delta, ATP5F1E/subunit epsilon, ATP5PF/subunit F6, ATP5PB/subunit b, ATP5PD/subunit d, ATP5PO/subunit OSCP. ATP synthase complex consists of a soluble F(1) head domain (subunits alpha(3) and beta(3)) - the catalytic core - and a membrane F(0) domain - the membrane proton channel (subunits c, a, 8, e, f, g, k and j). These two domains are linked by a central stalk (subunits gamma, delta, and epsilon) rotating inside the F1 region and a stationary peripheral stalk (subunits F6, b, d, and OSCP). Interacts with DNAJC30; interaction is direct.

The protein localises to the mitochondrion inner membrane. It catalyses the reaction H(+)(in) = H(+)(out). In terms of biological role, subunit a, of the mitochondrial membrane ATP synthase complex (F(1)F(0) ATP synthase or Complex V) that produces ATP from ADP in the presence of a proton gradient across the membrane which is generated by electron transport complexes of the respiratory chain. ATP synthase complex consist of a soluble F(1) head domain - the catalytic core - and a membrane F(1) domain - the membrane proton channel. These two domains are linked by a central stalk rotating inside the F(1) region and a stationary peripheral stalk. During catalysis, ATP synthesis in the catalytic domain of F(1) is coupled via a rotary mechanism of the central stalk subunits to proton translocation. With the subunit c (ATP5MC1), forms the proton-conducting channel in the F(0) domain, that contains two crucial half-channels (inlet and outlet) that facilitate proton movement from the mitochondrial intermembrane space (IMS) into the matrix. Protons are taken up via the inlet half-channel and released through the outlet half-channel, following a Grotthuss mechanism. The chain is ATP synthase F(0) complex subunit a from Sus scrofa (Pig).